The sequence spans 359 residues: Guanine nucleotide-binding protein subunit alpha-11 (359 aa).

Residues C9 and C10 are each lipidated (S-palmitoyl cysteine). The 322-residue stretch at 38–359 folds into the G-alpha domain; the sequence is RELKLLLLGT…QLNLKEYNLV (322 aa). Residues 41 to 54 are G1 motif; that stretch reads KLLLLGTGESGKST. Residues 46 to 53 and 180 to 183 each bind GTP; these read GTGESGKS and LRVR. Residue S53 coordinates Mg(2+). A G2 motif region spans residues 178 to 186; the sequence is DVLRVRVPT. Mg(2+) is bound at residue T186. The interval 201-210 is G3 motif; that stretch reads FRMVDVGGQR. The tract at residues 270–277 is G4 motif; sequence ILFLNKKD. GTP-binding positions include 274–277 and A331; that span reads NKKD. The tract at residues 329–334 is G5 motif; it reads TCATDT.

It belongs to the G-alpha family. G(q) subfamily. G proteins are composed of 3 units; alpha, beta and gamma. The alpha chain contains the guanine nucleotide binding site. Interacts with RGS22. Interacts with NTSR1.

It is found in the cell membrane. Its subcellular location is the cytoplasm. It catalyses the reaction GTP + H2O = GDP + phosphate + H(+). In terms of biological role, guanine nucleotide-binding proteins (G proteins) function as transducers downstream of G protein-coupled receptors (GPCRs) in numerous signaling cascades. The alpha chain contains the guanine nucleotide binding site and alternates between an active, GTP-bound state and an inactive, GDP-bound state. Signaling by an activated GPCR promotes GDP release and GTP binding. The alpha subunit has a low GTPase activity that converts bound GTP to GDP, thereby terminating the signal. Both GDP release and GTP hydrolysis are modulated by numerous regulatory proteins. Signaling is mediated via phospholipase C-beta-dependent inositol lipid hydrolysis for signal propagation: activates phospholipase C-beta: following GPCR activation, GNA11 activates PLC-beta (PLCB1, PLCB2, PLCB3 or PLCB4), leading to production of diacylglycerol (DAG) and inositol 1,4,5-trisphosphate (IP3). Transduces FFAR4 signaling in response to long-chain fatty acids (LCFAs). Together with GNAQ, required for heart development. In the respiratory epithelium, transmits OXGR1-dependent signals that lead to downstream intracellular Ca(2+) release and mucocilliary clearance of airborne pathogens. This Bos taurus (Bovine) protein is Guanine nucleotide-binding protein subunit alpha-11 (GNA11).